The following is a 450-amino-acid chain: MAASKTQGAVARMQEDRDGSCSTVGGVGYGDSKDCILEPLSLPESPGGTTTLEGSPSVPCIFCEEHFPVAEQDKLLKHMIIEHKIVIADVKLVADFQRYILYWRKRFTEQPITDFCSVIRINSTAPFEEQENYFLLCDVLPEDRILREELQKQRLREILEQQQQERNDTNFHGVCMFCNEEFLGNRSVILNHMAREHAFNIGLPDNIVNCNEFLCTLQKKLDNLQCLYCEKTFRDKNTLKDHMRKKQHRKINPKNREYDRFYVINYLELGKSWEEVQLEDDRELLDHQEDDWSDWEEHPASAVCLFCEKQAETIEKLYVHMEDAHEFDLLKIKSELGLNFYQQVKLVNFIRRQVHQCRCYGCHVKFKSKADLRTHMEETKHTSLLPDRKTWDQLEYYFPTYENDTLLCTLSDSESDLTAQEQNENVPIISEDTSKLYALKQSSILNQLLL.

An N-acetylalanine modification is found at Ala2. C2H2-type zinc fingers lie at residues 224–248 (LQCL…KKQH) and 355–381 (HQCR…ETKH).

The protein belongs to the ZNF277 family. In terms of assembly, interacts (via zinc-finger domains) with RPS2/40S ribosomal protein S2, perhaps as nascent RPS2 is synthesized during translation; the interaction is direct; the interaction is extra-ribosomal. Interaction with RPS2 competes with the binding of RPS2 to protein arginine methyltransferase PRMT3. Interacts with Polycomb group (PcG) complex protein BMI1. May be part of a complex including at least ZNF277, BMI1 and RNF2/RING2.

It is found in the nucleus. In terms of biological role, probable transcription factor. Involved in modulation of cellular senescence; represses transcription of the tumor suppressor gene INK4A/ARF, perhaps acting via the Polycomb group (PcG) complex PRC1. The protein is Zinc finger protein 277 (ZNF277) of Homo sapiens (Human).